Consider the following 500-residue polypeptide: Probable cytosol aminopeptidase (500 aa).

The Mn(2+) site is built by Lys-261 and Asp-266. Lys-273 is a catalytic residue. Residues Asp-284, Asp-343, and Glu-345 each contribute to the Mn(2+) site. Residue Arg-347 is part of the active site.

The protein belongs to the peptidase M17 family. It depends on Mn(2+) as a cofactor.

Its subcellular location is the cytoplasm. The enzyme catalyses Release of an N-terminal amino acid, Xaa-|-Yaa-, in which Xaa is preferably Leu, but may be other amino acids including Pro although not Arg or Lys, and Yaa may be Pro. Amino acid amides and methyl esters are also readily hydrolyzed, but rates on arylamides are exceedingly low.. The catalysed reaction is Release of an N-terminal amino acid, preferentially leucine, but not glutamic or aspartic acids.. In terms of biological role, presumably involved in the processing and regular turnover of intracellular proteins. Catalyzes the removal of unsubstituted N-terminal amino acids from various peptides. This Bacillus subtilis (strain 168) protein is Probable cytosol aminopeptidase (pepA).